A 411-amino-acid polypeptide reads, in one-letter code: Probable tRNA pseudouridine synthase D (411 aa).

Aspartate 79 serves as the catalytic Nucleophile. A TRUD domain is found at glycine 150–alanine 369.

It belongs to the pseudouridine synthase TruD family.

It catalyses the reaction uridine(13) in tRNA = pseudouridine(13) in tRNA. Functionally, could be responsible for synthesis of pseudouridine from uracil-13 in transfer RNAs. The protein is Probable tRNA pseudouridine synthase D of Thermoplasma acidophilum (strain ATCC 25905 / DSM 1728 / JCM 9062 / NBRC 15155 / AMRC-C165).